Consider the following 570-residue polypeptide: High-affinity hexose transporter HXT7 (570 aa).

Topologically, residues 1 to 60 are cytoplasmic; the sequence is MSQDAAIAEQTPVEHLSAVDSASHSVLSTPSNKAERDEIKAYGEGEEHEPVVEIPKRPAS. The chain crosses the membrane as a helical span at residues 61–81; the sequence is AYVTVSIMCIMIAFGGFVFGW. Residues 82-116 are Extracellular-facing; that stretch reads DTGTISGFINQTDFIRRFGMKHKDGTNYLSKVRTG. A glycan (N-linked (GlcNAc...) asparagine) is linked at asparagine 91. The chain crosses the membrane as a helical span at residues 117–137; that stretch reads LIVSIFNIGCAIGGIILSKLG. Over 138–143 the chain is Cytoplasmic; the sequence is DMYGRK. The helical transmembrane segment at 144–164 threads the bilayer; sequence VGLIVVVVIYIIGIIIQIASI. Topologically, residues 165-174 are extracellular; the sequence is NKWYQYFIGR. A helical membrane pass occupies residues 175-195; it reads IISGLGVGGIAVLSPMLISEV. Residues 196–201 are Cytoplasmic-facing; it reads SPKHLR. The chain crosses the membrane as a helical span at residues 202–222; sequence GTLVSCYQLMITAGIFLGYCT. At 223 to 236 the chain is on the extracellular side; the sequence is NFGTKNYSNSVQWR. A glycan (N-linked (GlcNAc...) asparagine) is linked at asparagine 228. Residues 237–257 form a helical membrane-spanning segment; it reads VPLGLCFAWALFMIGGMTFVP. Over 258-340 the chain is Cytoplasmic; the sequence is ESPRYLAEVG…IQSLQQLTGD (83 aa). The chain crosses the membrane as a helical span at residues 341–357; the sequence is NYFFYYGTTIFKAVGLS. At 358 to 363 the chain is on the extracellular side; the sequence is DSFETS. Residues 364–381 form a helical membrane-spanning segment; it reads IVLGIVNFASTFVGIYVV. Over 382–388 the chain is Cytoplasmic; sequence ERYGRRT. The chain crosses the membrane as a helical span at residues 389-409; it reads CLLWGAASMTACMVVYASVGV. The Extracellular portion of the chain corresponds to 410 to 431; it reads TRLWPNGQDQPSSKGAGNCMIV. The helical transmembrane segment at 432–452 threads the bilayer; the sequence is FACFYIFCFATTWAPIPYVVV. Residues 453–469 lie on the Cytoplasmic side of the membrane; it reads SETFPLRVKSKAMSIAT. A helical membrane pass occupies residues 470-490; sequence AANWLWGFLIGFFTPFITGAI. Asparagine 491 is a topological domain (extracellular). Residues 492–512 traverse the membrane as a helical segment; sequence FYYGYVFMGCLVFMFFYVLLV. Residues 513 to 570 are Cytoplasmic-facing; it reads VPETKGLTLEEVNTMWEEGVLPWKSASWVPPSRRGANYDAEEMTHDDKPLYKRMFSTK. Position 556 is a phosphothreonine (threonine 556). Lysine 560 participates in a covalent cross-link: Glycyl lysine isopeptide (Lys-Gly) (interchain with G-Cter in ubiquitin).

The protein belongs to the major facilitator superfamily. Sugar transporter (TC 2.A.1.1) family.

It localises to the membrane. Its function is as follows. High-affinity glucose transporter. The sequence is that of High-affinity hexose transporter HXT7 (HXT7) from Saccharomyces cerevisiae (strain ATCC 204508 / S288c) (Baker's yeast).